The following is a 711-amino-acid chain: C-Jun-amino-terminal kinase-interacting protein 1 (711 aa).

The segment at M1–I27 is disordered. The segment covering A14 to L25 has biased composition (low complexity). Phosphoserine is present on residues S15, S29, and S40. The disordered stretch occupies residues A78–T371. A Phosphothreonine; by MAPK8, MAPK9 and MAPK10 modification is found at T103. The span at G105 to E116 shows a compositional bias: acidic residues. The interval P127–P285 is JNK-binding domain (JBD). Residues G139–G149 show a composition bias toward low complexity. At S152 the chain carries Phosphoserine. Positions R157–T176 are minimal inhibitory domain (MID). The segment covering T162–L182 has biased composition (polar residues). A phosphoserine mark is found at S181, S187, S193, S195, and S196. Polar residues predominate over residues R194–Q204. T205 carries the post-translational modification Phosphothreonine; by MAPK8, MAPK9 and MAPK10. At S214 the chain carries Phosphoserine. Over residues D228–Q244 the composition is skewed to polar residues. Residues I267 to A277 show a composition bias toward basic and acidic residues. Positions L283–S471 are interaction with MAP3K7. Residues S311, S328, S330, S340, S355, S366, S369, S407, and S409 each carry the phosphoserine modification. 2 short sequence motifs (D-box) span residues R353–P360 and R364–S372. Residue T411 is modified to Phosphothreonine. Positions E429 to E451 are disordered. Phosphoserine is present on residues S444 and S447. T448 carries the post-translational modification Phosphothreonine. S469, S471, S472, and S473 each carry phosphoserine. Positions S471–I660 are interaction with VRK2. Residues E488–K549 form the SH3 domain. Residues S561–E700 enclose the PID domain.

This sequence belongs to the JIP scaffold family. Forms homo- or heterooligomeric complexes. Binds specific components of the JNK signaling pathway namely, MAPK8/JNK1, MAPK9/JNK2, MAPK10/JNK3, MAP2K7/MKK7, MAP3K11/MLK3 and DLK1. Also binds the proline-rich domain-containing splice variant of apolipoprotein E receptor 2 (ApoER2). Interacts, via the PID domain, with ARHGEF28. Binds the cytoplasmic tails of LRP1 and LRP2 (Megalin). Binds the TPR motif-containing C-terminal of KNS2, then the pre-assembled MAPK8IP1 scaffolding complexes are transported as a cargo of kinesin, to the required subcellular location. Interacts with the cytoplasmic domain of APP. Interacts with DCLK2. Interacts with MAP3K7/TAK1. Interacts with isoform 1 and isoform 2 of VRK2. Found in a complex with SH3RF1, RAC1, MAP3K11/MLK3, MAP2K7/MKK7 and MAPK8/JNK1. Found in a complex with SH3RF1, RAC2, MAP3K7/TAK1, MAP2K7/MKK7, MAPK8/JNK1 and MAPK9/JNK2. Interacts with SH3RF2. Post-translationally, phosphorylated by MAPK8, MAPK9 and MAPK10. Phosphorylation on Thr-103 is also necessary for the dissociation and activation of MAP3K12. Phosphorylated by isoform 1 and isoform 2 of VRK2. Hyperphosphorylated during mitosis following activation of stress-activated and MAP kinases. Ubiquitinated. Two preliminary events are required to prime for ubiquitination; phosphorylation and an increased in intracellular calcium concentration. Then, the calcium influx initiates ubiquitination and degradation by the ubiquitin-proteasome pathway. As to expression, highly expressed in brain. Expressed in neurons, localizing to neurite tips in differentiating cells. Also expressed in the pancreas, testis and prostate. Low levels in heart, ovary and small intestine. Decreased levels in pancreatic beta cells sensitize cells to IL-1-beta-induced apoptosis.

The protein localises to the cytoplasm. Its subcellular location is the perinuclear region. It localises to the nucleus. The protein resides in the endoplasmic reticulum membrane. It is found in the mitochondrion membrane. Its function is as follows. The JNK-interacting protein (JIP) group of scaffold proteins selectively mediates JNK signaling by aggregating specific components of the MAPK cascade to form a functional JNK signaling module. Required for JNK activation in response to excitotoxic stress. Cytoplasmic MAPK8IP1 causes inhibition of JNK-regulated activity by retaining JNK in the cytoplasm and inhibiting JNK phosphorylation of c-Jun. May also participate in ApoER2-specific reelin signaling. Directly, or indirectly, regulates GLUT2 gene expression and beta-cell function. Appears to have a role in cell signaling in mature and developing nerve terminals. May function as a regulator of vesicle transport, through interactions with the JNK-signaling components and motor proteins. Functions as an anti-apoptotic protein and whose level seems to influence the beta-cell death or survival response. Acts as a scaffold protein that coordinates with SH3RF1 in organizing different components of the JNK pathway, including RAC1 or RAC2, MAP3K11/MLK3 or MAP3K7/TAK1, MAP2K7/MKK7, MAPK8/JNK1 and/or MAPK9/JNK2 into a functional multiprotein complex to ensure the effective activation of the JNK signaling pathway. Regulates the activation of MAPK8/JNK1 and differentiation of CD8(+) T-cells. The polypeptide is C-Jun-amino-terminal kinase-interacting protein 1 (MAPK8IP1) (Homo sapiens (Human)).